A 55-amino-acid chain; its full sequence is Locustin (55 aa).

Disulfide bonds link Cys-5–Cys-40, Cys-7–Cys-36, Cys-10–Cys-32, and Cys-17–Cys-54.

In terms of assembly, monomer. In terms of tissue distribution, stored in hemocyte granules and secreted into the hemolymph.

It is found in the secreted. Functionally, has antibacterial activity against Gram-positive bacterium M.luteus. The sequence is that of Locustin from Locusta migratoria (Migratory locust).